A 416-amino-acid polypeptide reads, in one-letter code: Phosphatidylinositol 5-phosphate 4-kinase type-2 beta (416 aa).

Ser2 bears the N-acetylserine mark. Thr8 carries the phosphothreonine modification. Ser19 is modified (phosphoserine). A PIPK domain is found at 38–415; sequence ASEPILSVLM…RFNEFMSNIL (378 aa). The required for interaction with PIP5K1A stretch occupies residues 64 to 70; it reads VMLMPDD. An N6-acetyllysine mark is found at Lys94 and Lys150. ATP-binding positions include 202 to 204 and Lys214; that span reads RNV. Residues 203-204 and Lys214 contribute to the GTP site; that span reads NV. Thr322 carries the post-translational modification Phosphothreonine. The residue at position 326 (Ser326) is a Phosphoserine. Residue Asp369 coordinates GTP.

Homodimer. Binds TNFRSF1A. Interacts with PIP4K2A; the interaction suppresses ubiquitination by the SPOP/CUL3 complex. Probably interacts with PIP5K1A; the interaction inhibits PIP5K1A kinase activity. Post-translationally, ubiquitinated by the SPOP/CUL3 complex. Ubiquitination is stimulated by PtdIns5P levels. In terms of processing, phosphorylated on serine residues.

The protein localises to the endoplasmic reticulum membrane. The protein resides in the cell membrane. It is found in the nucleus. It localises to the cytoplasm. The catalysed reaction is a 1,2-diacyl-sn-glycero-3-phospho-(1D-myo-inositol-5-phosphate) + ATP = a 1,2-diacyl-sn-glycero-3-phospho-(1D-myo-inositol-4,5-bisphosphate) + ADP + H(+). It catalyses the reaction 1,2-dihexadecanoyl-sn-glycero-3-phospho-(1D-myo-inositol-5-phosphate) + ATP = 1,2-dihexadecanoyl-sn-glycero-3-phospho-(1D-myo-inositol-4,5-bisphosphate) + ADP + H(+). It carries out the reaction 1,2-dihexadecanoyl-sn-glycero-3-phospho-(1D-myo-inositol-5-phosphate) + GTP = 1,2-dihexadecanoyl-sn-glycero-3-phospho-(1D-myo-inositol-4,5-bisphosphate) + GDP + H(+). Functionally, participates in the biosynthesis of phosphatidylinositol 4,5-bisphosphate. Preferentially utilizes GTP, rather than ATP, for PI(5)P phosphorylation and its activity reflects changes in direct proportion to the physiological GTP concentration. Its GTP-sensing activity is critical for metabolic adaptation. In collaboration with PIP4K2A, has a role in mediating autophagy in times of nutrient stress. Required for autophagosome-lysosome fusion and the regulation of cellular lipid metabolism. PIP4Ks negatively regulate insulin signaling through a catalytic-independent mechanism. They interact with PIP5Ks and suppress PIP5K-mediated PtdIns(4,5)P2 synthesis and insulin-dependent conversion to PtdIns(3,4,5)P3. The protein is Phosphatidylinositol 5-phosphate 4-kinase type-2 beta of Mus musculus (Mouse).